A 71-amino-acid polypeptide reads, in one-letter code: Large ribosomal subunit protein bL31 (71 aa).

Cys16, Cys18, Cys37, and Cys40 together coordinate Zn(2+).

The protein belongs to the bacterial ribosomal protein bL31 family. Type A subfamily. In terms of assembly, part of the 50S ribosomal subunit. Requires Zn(2+) as cofactor.

In terms of biological role, binds the 23S rRNA. This Serratia proteamaculans (strain 568) protein is Large ribosomal subunit protein bL31.